Reading from the N-terminus, the 151-residue chain is Ribosome maturation factor RimP (151 aa).

Belongs to the RimP family.

The protein resides in the cytoplasm. Its function is as follows. Required for maturation of 30S ribosomal subunits. This Shewanella sp. (strain ANA-3) protein is Ribosome maturation factor RimP.